The chain runs to 72 residues: Large ribosomal subunit protein bL28 (72 aa).

Belongs to the bacterial ribosomal protein bL28 family.

The protein is Large ribosomal subunit protein bL28 of Chlorobium luteolum (strain DSM 273 / BCRC 81028 / 2530) (Pelodictyon luteolum).